Here is a 676-residue protein sequence, read N- to C-terminus: Probable potassium transport system protein Kup (676 aa).

12 helical membrane passes run 14-34, 56-76, 97-117, 142-162, 173-193, 219-239, 252-272, 296-316, 345-365, 376-396, 402-422, and 429-449; these read GLLI…LYVM, ISLI…IIAL, AAWL…DGTL, VSNQ…LFSI, AFGP…LINI, AGFA…ALYS, SWPF…VWIL, LASI…LITG, IYIP…VLFF, GLSI…WLVL, LANL…MGSS, and GGYV…VWYF.

Belongs to the HAK/KUP transporter (TC 2.A.72) family.

The protein resides in the cell membrane. It carries out the reaction K(+)(in) + H(+)(in) = K(+)(out) + H(+)(out). Transport of potassium into the cell. Likely operates as a K(+):H(+) symporter. This is Probable potassium transport system protein Kup from Lactobacillus delbrueckii subsp. bulgaricus (strain ATCC BAA-365 / Lb-18).